The sequence spans 415 residues: Methylmalonic aciduria type A homolog, mitochondrial (415 aa).

The transit peptide at 1 to 62 directs the protein to the mitochondrion; it reads MTISTLLLSP…LLSDGFRRTL (62 aa). Residues 147–155, aspartate 289, and 325–327 contribute to the GTP site; these read GPPGAGKST and SAR.

Belongs to the SIMIBI class G3E GTPase family. ArgK/MeaB subfamily. As to quaternary structure, homodimer. Interacts with MMUT (the apoenzyme form); the interaction is GTP dependent.

It is found in the mitochondrion. The protein localises to the cytoplasm. It carries out the reaction GTP + H2O = GDP + phosphate + H(+). With respect to regulation, GTPase activity is stimulated by MMUT. In terms of biological role, GTPase, binds and hydrolyzes GTP. Involved in intracellular vitamin B12 metabolism, mediates the transport of cobalamin (Cbl) into mitochondria for the final steps of adenosylcobalamin (AdoCbl) synthesis. Functions as a G-protein chaperone that assists AdoCbl cofactor delivery from MMAB to the methylmalonyl-CoA mutase (MMUT). Plays a dual role as both a protectase and a reactivase for MMUT. Protects MMUT from progressive inactivation by oxidation by decreasing the rate of the formation of the oxidized inactive cofactor hydroxocobalamin (OH2Cbl). Additionally acts a reactivase by promoting the replacement of OH2Cbl by the active cofactor AdoCbl, restoring the activity of MMUT in the presence and hydrolysis of GTP. The polypeptide is Methylmalonic aciduria type A homolog, mitochondrial (Mus musculus (Mouse)).